The following is a 417-amino-acid chain: MFPRDARLDMYDPELAKAIAAEVMRQEDHVELIASENYCSTLVMQVQGSQLTNKYAEGYSGKRYYGGCECVDIAEQLAIERAKQLFGADYANVQPHSGSQANQAVYFALLQPGDTILGMSLAHGGHLTHGANVNVSGKLFNAVQYGVNGQGLIDYEAVESLALEHRPKMVVAGFSAYSQKIDWARFRAIADQVGAYLLVDMAHVAGLVAACVYPNPLPHAHVVTSTTHKTLRGPRGGIIVAQAPQEALVKKLQSIVFPGIQGGPLMHVIAAKAVAFKEALEPAFKVYQQQVVKNAKAMAETLMLRGYKIVSGGTENHLMLVDMIGRDVSGKDAEGALGQAHITVNKNAVPDDPRSPFVTSGLRLGTPAVTTRGYQEQDCVDLAHWIADVLDAPADATVIAAVREKVAAQCRKYPVYR.

(6S)-5,6,7,8-tetrahydrofolate-binding positions include Leu-121 and 125–127 (GHL). Lys-229 is modified (N6-(pyridoxal phosphate)lysine). 355 to 357 (SPF) is a binding site for (6S)-5,6,7,8-tetrahydrofolate.

Belongs to the SHMT family. Homodimer. The cofactor is pyridoxal 5'-phosphate.

The protein localises to the cytoplasm. The catalysed reaction is (6R)-5,10-methylene-5,6,7,8-tetrahydrofolate + glycine + H2O = (6S)-5,6,7,8-tetrahydrofolate + L-serine. The protein operates within one-carbon metabolism; tetrahydrofolate interconversion. Its pathway is amino-acid biosynthesis; glycine biosynthesis; glycine from L-serine: step 1/1. Its function is as follows. Catalyzes the reversible interconversion of serine and glycine with tetrahydrofolate (THF) serving as the one-carbon carrier. This reaction serves as the major source of one-carbon groups required for the biosynthesis of purines, thymidylate, methionine, and other important biomolecules. Also exhibits THF-independent aldolase activity toward beta-hydroxyamino acids, producing glycine and aldehydes, via a retro-aldol mechanism. The sequence is that of Serine hydroxymethyltransferase from Xylella fastidiosa (strain 9a5c).